The following is a 336-amino-acid chain: Malate dehydrogenase, cytoplasmic (336 aa).

NAD(+) is bound by residues 11–17 and Asp42; that span reads GAAGQIG. Residues Arg92 and Arg98 each coordinate substrate. NAD(+) is bound by residues Asn105, Gln112, and 129-131; that span reads VGN. Substrate-binding residues include Asn131 and Arg163. His188 serves as the catalytic Proton acceptor.

This sequence belongs to the LDH/MDH superfamily. MDH type 2 family. As to quaternary structure, homodimer.

It is found in the cytoplasm. The enzyme catalyses (S)-malate + NAD(+) = oxaloacetate + NADH + H(+). Catalyzes the reversible conversion of (S)-malate to oxaloacetate in the cytoplasm where oxaloacetate is used for gluconeogenesis. This is Malate dehydrogenase, cytoplasmic from Caenorhabditis elegans.